A 700-amino-acid polypeptide reads, in one-letter code: Calpain-2 catalytic subunit (700 aa).

A2 is modified (N-acetylalanine). Residues 2–19 (AGIAMKLAKDREAAEGLG) constitute a propeptide, anchors to the small subunit. Residues 45 to 344 (LFQDPSFPAL…YSRLEICNLT (300 aa)) form the Calpain catalytic domain. Ca(2+) contacts are provided by I89, G91, and D96. Residue C105 is part of the active site. Positions 175, 229, and 230 each coordinate Ca(2+). Catalysis depends on residues H262 and N286. Ca(2+) contacts are provided by E292, D299, Q319, and E323. Positions 345 to 514 (PDTLTCDSYK…KKADYQTVDD (170 aa)) are domain III. Residues 515-529 (EIEANIEEIEANEED) form a linker region. Positions 530–700 (IGDGFRRLFA…LISWLSFSVL (171 aa)) are domain IV. Ca(2+) contacts are provided by A542, D545, E547, E552, D585, D587, S589, K591, E596, D615, D617, S619, T621, E626, D658, and N661. EF-hand domains lie at 572–605 (FSIE…TKIQ) and 602–637 (TKIQ…AGFK). Residues 667-700 (VRLEILFKIFKQLDPENTGTIQLDLISWLSFSVL) form the EF-hand 3 domain.

It belongs to the peptidase C2 family. As to quaternary structure, forms a heterodimer with a small (regulatory) subunit (CAPNS1). Interacts with CPEB3; this leads to cleavage of CPEB3. Requires Ca(2+) as cofactor. In terms of tissue distribution, ubiquitous.

Its subcellular location is the cytoplasm. It localises to the cell membrane. It carries out the reaction Broad endopeptidase specificity.. With respect to regulation, activated by 200-1000 micromolar concentrations of calcium and inhibited by calpastatin. Functionally, calcium-regulated non-lysosomal thiol-protease which catalyze limited proteolysis of substrates involved in cytoskeletal remodeling and signal transduction. Proteolytically cleaves MYOC at 'Arg-226'. Proteolytically cleaves CPEB3 following neuronal stimulation which abolishes CPEB3 translational repressor activity, leading to translation of CPEB3 target mRNAs. The chain is Calpain-2 catalytic subunit (Capn2) from Rattus norvegicus (Rat).